The chain runs to 522 residues: DNA-binding protein Ikaros (522 aa).

Disordered stretches follow at residues 1-48 and 96-115; these read MEME…HNNR and AKVN…YSSA. 4 C2H2-type zinc fingers span residues 125–147, 153–175, 181–203, and 209–232; these read LKCD…KRSH, FQCT…IKLH, FKCH…LRTH, and HKCA…ERCH. The disordered stretch occupies residues 379 to 406; it reads KSASSEKDGSPSHSGQDSTDTESNNEEK. C2H2-type zinc fingers lie at residues 468-490 and 496-520; these read YRCE…MGCH and FECN…RGEH.

Belongs to the Ikaros C2H2-type zinc-finger protein family. As to expression, expression mainly limited to thymus, spleen and pronephros. Very low expression in liver. No expression in testis, brain, eye and muscle.

The protein resides in the nucleus. In terms of biological role, binds and activates the enhancer (delta-A element) of the CD3-delta gene. Functions in the specification and the maturation of the T-lymphocyte. Also interacts with a critical control element in the TDT (terminal deoxynucleotidyltransferase) promoter as well as with the promoters for other genes expressed during early stages of B- and T-cell development. Function is isoform-specific and is modulated by dominant-negative inactive isoforms. In Oncorhynchus mykiss (Rainbow trout), this protein is DNA-binding protein Ikaros (ikzf1).